Reading from the N-terminus, the 365-residue chain is NAD(P)H-quinone oxidoreductase subunit 1, chloroplastic (365 aa).

Transmembrane regions (helical) follow at residues 27-47, 98-118, 129-149, 165-185, 203-223, 253-273, 302-322, and 345-365; these read VWIF…VLVI, FSIG…VIPF, IGIF…LMSG, AAQS…ISLL, FWGW…ISSL, FGLF…FVTI, IFGT…FLFI, and FLLP…LFSL.

The protein belongs to the complex I subunit 1 family. NDH is composed of at least 16 different subunits, 5 of which are encoded in the nucleus.

Its subcellular location is the plastid. The protein localises to the chloroplast thylakoid membrane. The catalysed reaction is a plastoquinone + NADH + (n+1) H(+)(in) = a plastoquinol + NAD(+) + n H(+)(out). It carries out the reaction a plastoquinone + NADPH + (n+1) H(+)(in) = a plastoquinol + NADP(+) + n H(+)(out). Functionally, NDH shuttles electrons from NAD(P)H:plastoquinone, via FMN and iron-sulfur (Fe-S) centers, to quinones in the photosynthetic chain and possibly in a chloroplast respiratory chain. The immediate electron acceptor for the enzyme in this species is believed to be plastoquinone. Couples the redox reaction to proton translocation, and thus conserves the redox energy in a proton gradient. This chain is NAD(P)H-quinone oxidoreductase subunit 1, chloroplastic, found in Arabis hirsuta (Hairy rock-cress).